Here is a 420-residue protein sequence, read N- to C-terminus: Glycogen synthase kinase-3 beta (420 aa).

Residues 1-22 (MSGRPRTTSFAESCKPVQQPSA) show a composition bias toward polar residues. Positions 1-53 (MSGRPRTTSFAESCKPVQQPSAFGSMKVSRDKDGSKVTTVVATPGQGPDRPQE) are disordered. A Phosphoserine; by PKB/AKT1, RPS6KA3 and SGK3 modification is found at Ser-9. Cys-14 is lipidated: S-palmitoyl cysteine. One can recognise a Protein kinase domain in the interval 56–340 (YTDTKVIGNG…PLEACAHSFF (285 aa)). Residues 62–70 (IGNGSFGVV) and Lys-85 contribute to the ATP site. The active-site Proton acceptor is Asp-181. Tyr-216 is subject to Phosphotyrosine. The disordered stretch occupies residues 385–420 (QAAASPPANATAASDTNAGDRGQTNNAASASASNST). Composition is skewed to low complexity over residues 386–401 (AAAS…SDTN) and 409–420 (NNAASASASNST). Ser-389 carries the post-translational modification Phosphoserine.

It belongs to the protein kinase superfamily. CMGC Ser/Thr protein kinase family. GSK-3 subfamily. As to quaternary structure, monomer. Interacts with DAB2IP (via C2 domain); the interaction stimulates GSK3B kinase activation. Interacts (via C2 domain) with PPP2CA. Interacts with CABYR, MMP2, MUC1, NIN and PRUNE1. Interacts with AXIN1; the interaction mediates hyperphosphorylation of CTNNB1 leading to its ubiquitination and destruction. Interacts with and phosphorylates SNAI1. Interacts with DNM1L (via a C-terminal domain). Interacts with ARRB2. Interacts with DISC1. Found in a complex composed of MACF1, APC, AXIN1, CTNNB1 and GSK3B. Interacts with SGK3. Interacts with the CLOCK-BMAL1 heterodimer. Interacts with ZBED3. Interacts with the BMAL1. The complex composed, at least, of APC, CTNNB1 and GSK3B interacts with JPT1; the interaction requires the inactive form of GSK3B (phosphorylated at 'Ser-9'). Forms a complex composed of PRKAR2A or PRKAR2B, GSK3B and GSKIP through GSKIP interaction; facilitates PKA-induced phosphorylation and regulates GSK3B activity. Interacts with GSKIP. Interacts with GID8. Interacts with PIWIL2. Interacts with LMBR1L. Interacts with DDX3X. Interacts with BIRC2. Interacts with TNFRSF10B; TNFRSF10B stimulation inhibits GSK3B kinase activity. Found in a complex with SLC39A6, SLC39A10 and with GSK3B that controls NCAM1 phosphorylation. Interacts with PKP3 (via ARM repeats); the interaction may be involved in PKP3 protein degradation. In terms of processing, phosphorylated by AKT1 and ILK1. Upon insulin-mediated signaling, the activated PKB/AKT1 protein kinase phosphorylates and deactivates GSK3B, resulting in the dephosphorylation and activation of GYS1. Activated by phosphorylation at Tyr-216. Phosphorylation of Ser-9 in the hippocampus peaks at CT0, whereas in the liver it peaks at CT12. Inactivated by phosphorylation at Ser-9. Phosphorylated in a circadian manner in the hippocampus. Post-translationally, mono-ADP-ribosylation by PARP10 negatively regulates kinase activity. Palmitoylated. Palmitoylation by ZDHHC4 prevents AKT1-mediated phosphorylation. As to expression, expressed in the liver (at protein level).

It localises to the cytoplasm. The protein localises to the nucleus. It is found in the cell membrane. It carries out the reaction L-seryl-[tau protein] + ATP = O-phospho-L-seryl-[tau protein] + ADP + H(+). It catalyses the reaction L-threonyl-[tau protein] + ATP = O-phospho-L-threonyl-[tau protein] + ADP + H(+). The catalysed reaction is L-seryl-[protein] + ATP = O-phospho-L-seryl-[protein] + ADP + H(+). The enzyme catalyses L-threonyl-[protein] + ATP = O-phospho-L-threonyl-[protein] + ADP + H(+). With respect to regulation, activated by phosphorylation at Tyr-216. In response to insulin, inhibited by phosphorylation at Ser-9 by PKB/AKT1 and RPS6KA3; phosphorylation at this site causes a conformational change, preventing access of substrates to the active site. Inhibited by IL22 treatment which also triggers phosphorylation at Ser-9, promoting inactivation. Inhibited by lithium. Its function is as follows. Constitutively active protein kinase that acts as a negative regulator in the hormonal control of glucose homeostasis, Wnt signaling and regulation of transcription factors and microtubules, by phosphorylating and inactivating glycogen synthase (GYS1 or GYS2), EIF2B, CTNNB1/beta-catenin, APC, AXIN1, DPYSL2/CRMP2, JUN, NFATC1/NFATC, MAPT/TAU and MACF1. Requires primed phosphorylation of the majority of its substrates. In skeletal muscle, contributes to insulin regulation of glycogen synthesis by phosphorylating and inhibiting GYS1 activity and hence glycogen synthesis. May also mediate the development of insulin resistance by regulating activation of transcription factors. Regulates protein synthesis by controlling the activity of initiation factor 2B (EIF2BE/EIF2B5) in the same manner as glycogen synthase. In Wnt signaling, GSK3B forms a multimeric complex with APC, AXIN1 and CTNNB1/beta-catenin and phosphorylates the N-terminus of CTNNB1 leading to its degradation mediated by ubiquitin/proteasomes. Phosphorylates JUN at sites proximal to its DNA-binding domain, thereby reducing its affinity for DNA. Phosphorylates NFATC1/NFATC on conserved serine residues promoting NFATC1/NFATC nuclear export, shutting off NFATC1/NFATC gene regulation, and thereby opposing the action of calcineurin. Phosphorylates MAPT/TAU on 'Thr-548', decreasing significantly MAPT/TAU ability to bind and stabilize microtubules. MAPT/TAU is the principal component of neurofibrillary tangles in Alzheimer disease. Plays an important role in ERBB2-dependent stabilization of microtubules at the cell cortex. Phosphorylates MACF1, inhibiting its binding to microtubules which is critical for its role in bulge stem cell migration and skin wound repair. Probably regulates NF-kappa-B (NFKB1) at the transcriptional level and is required for the NF-kappa-B-mediated anti-apoptotic response to TNF-alpha (TNF/TNFA). Negatively regulates replication in pancreatic beta-cells, resulting in apoptosis, loss of beta-cells and diabetes. Through phosphorylation of the anti-apoptotic protein MCL1, may control cell apoptosis in response to growth factors deprivation. Phosphorylates MUC1 in breast cancer cells, decreasing the interaction of MUC1 with CTNNB1/beta-catenin. Is necessary for the establishment of neuronal polarity and axon outgrowth. Phosphorylates MARK2, leading to inhibition of its activity. Phosphorylates SIK1 at 'Thr-182', leading to sustainment of its activity. Phosphorylates ZC3HAV1 which enhances its antiviral activity. Phosphorylates SNAI1, leading to its ubiquitination and proteasomal degradation. Phosphorylates SFPQ at 'Thr-687' upon T-cell activation. Phosphorylates NR1D1 st 'Ser-55' and 'Ser-59' and stabilizes it by protecting it from proteasomal degradation. Regulates the circadian clock via phosphorylation of the major clock components including BMAL1, CLOCK and PER2. Phosphorylates CLOCK AT 'Ser-427' and targets it for proteasomal degradation. Phosphorylates BMAL1 at 'Ser-17' and 'Ser-21' and primes it for ubiquitination and proteasomal degradation. Phosphorylates FBXL2 at 'Thr-404' and primes it for ubiquitination by the SCF(FBXO3) complex and proteasomal degradation. Phosphorylates OGT at 'Ser-3' or 'Ser-4' which positively regulates its activity. Phosphorylates MYCN in neuroblastoma cells which may promote its degradation. Regulates the circadian rhythmicity of hippocampal long-term potentiation and BMAL1 and PER2 expression. Acts as a regulator of autophagy by mediating phosphorylation of KAT5/TIP60 under starvation conditions, activating KAT5/TIP60 acetyltransferase activity and promoting acetylation of key autophagy regulators, such as ULK1 and RUBCNL/Pacer. Negatively regulates extrinsic apoptotic signaling pathway via death domain receptors. Promotes the formation of an anti-apoptotic complex, made of DDX3X, BRIC2 and GSK3B, at death receptors, including TNFRSF10B. The anti-apoptotic function is most effective with weak apoptotic signals and can be overcome by stronger stimulation. Phosphorylates E2F1, promoting the interaction between E2F1 and USP11, stabilizing E2F1 and promoting its activity. Phosphorylates mTORC2 complex component RICTOR at 'Ser-1235' in response to endoplasmic stress, inhibiting mTORC2. Phosphorylates FXR1, promoting FXR1 ubiquitination by the SCF(FBXO4) complex and FXR1 degradation by the proteasome. Phosphorylates interleukin-22 receptor subunit IL22RA1, preventing its proteasomal degradation. In Mus musculus (Mouse), this protein is Glycogen synthase kinase-3 beta.